A 220-amino-acid polypeptide reads, in one-letter code: MMAYLVFLGPPGAGKGTYAKRIQEKTGIPHISTGDIFRDIVKKENDELGKKIKEIMEKGELVPDELVNEVVKRRLSEKDCEKGFILDGYPRTVAQAEFLDSFLESQNKQLTAAVLFDVPEDVVVQRLTSRRICPKCGRIYNMISLPPKEDELCDDCKVKLVQRDDDKEETVRHRYKVYLEKTQPVIDYYGKKGILKRVDGTIGIDNVVAEVLKIIGWSDK.

12–17 (GAGKGT) contacts ATP. Positions 32-62 (STGDIFRDIVKKENDELGKKIKEIMEKGELV) are NMP. AMP is bound by residues Thr33, Arg38, 60–62 (ELV), 88–91 (GYPR), and Gln95. An LID region spans residues 129–166 (SRRICPKCGRIYNMISLPPKEDELCDDCKVKLVQRDDD). Arg130 serves as a coordination point for ATP. Residues Cys133 and Cys136 each coordinate Zn(2+). 139–140 (IY) is an ATP binding site. 2 residues coordinate Zn(2+): Cys153 and Cys156. Residues Arg163 and Arg174 each contribute to the AMP site. Ile202 contacts ATP.

The protein belongs to the adenylate kinase family. Monomer.

It localises to the cytoplasm. It carries out the reaction AMP + ATP = 2 ADP. It participates in purine metabolism; AMP biosynthesis via salvage pathway; AMP from ADP: step 1/1. Catalyzes the reversible transfer of the terminal phosphate group between ATP and AMP. Plays an important role in cellular energy homeostasis and in adenine nucleotide metabolism. In Thermotoga neapolitana, this protein is Adenylate kinase.